A 282-amino-acid polypeptide reads, in one-letter code: Heat stress transcription factor A-6a (282 aa).

A DNA-binding region spans residues 17–111 (PTAFLTKTYN…LLKNIKRRKT (95 aa)). Positions 111–177 (TSSQTQTQSL…MMMNFLLKKI (67 aa)) are hydrophobic repeat HR-A/B. A Bipartite nuclear localization signal motif is present at residues 175–190 (KKIKKPSFLQSLRKRN). Residues 261 to 270 (EGIWKGFVLS) carry the AHA motif.

The protein belongs to the HSF family. Class A subfamily. In terms of assembly, homotrimer. Post-translationally, exhibits temperature-dependent phosphorylation.

The protein resides in the nucleus. Its function is as follows. Transcriptional activator that specifically binds DNA sequence 5'-AGAAnnTTCT-3' known as heat shock promoter elements (HSE). This is Heat stress transcription factor A-6a (HSFA6A) from Arabidopsis thaliana (Mouse-ear cress).